The sequence spans 150 residues: SsrA-binding protein (150 aa).

The protein belongs to the SmpB family.

The protein localises to the cytoplasm. Its function is as follows. Required for rescue of stalled ribosomes mediated by trans-translation. Binds to transfer-messenger RNA (tmRNA), required for stable association of tmRNA with ribosomes. tmRNA and SmpB together mimic tRNA shape, replacing the anticodon stem-loop with SmpB. tmRNA is encoded by the ssrA gene; the 2 termini fold to resemble tRNA(Ala) and it encodes a 'tag peptide', a short internal open reading frame. During trans-translation Ala-aminoacylated tmRNA acts like a tRNA, entering the A-site of stalled ribosomes, displacing the stalled mRNA. The ribosome then switches to translate the ORF on the tmRNA; the nascent peptide is terminated with the 'tag peptide' encoded by the tmRNA and targeted for degradation. The ribosome is freed to recommence translation, which seems to be the essential function of trans-translation. In Thermotoga maritima (strain ATCC 43589 / DSM 3109 / JCM 10099 / NBRC 100826 / MSB8), this protein is SsrA-binding protein.